A 232-amino-acid chain; its full sequence is Uracil-DNA glycosylase (232 aa).

Asp66 functions as the Proton acceptor in the catalytic mechanism.

This sequence belongs to the uracil-DNA glycosylase (UDG) superfamily. UNG family.

The protein resides in the cytoplasm. It catalyses the reaction Hydrolyzes single-stranded DNA or mismatched double-stranded DNA and polynucleotides, releasing free uracil.. Functionally, excises uracil residues from the DNA which can arise as a result of misincorporation of dUMP residues by DNA polymerase or due to deamination of cytosine. The protein is Uracil-DNA glycosylase of Lactobacillus helveticus (strain DPC 4571).